Here is a 512-residue protein sequence, read N- to C-terminus: tRNA-guanine(15) transglycosylase (512 aa).

D85 serves as the catalytic Nucleophile. A substrate-binding site is contributed by D120. Zn(2+) contacts are provided by C272, C274, and C277.

It belongs to the archaeosine tRNA-ribosyltransferase family. Zn(2+) serves as cofactor.

The catalysed reaction is guanosine(15) in tRNA + 7-cyano-7-deazaguanine = 7-cyano-7-carbaguanosine(15) in tRNA + guanine. It functions in the pathway tRNA modification; archaeosine-tRNA biosynthesis. Exchanges the guanine residue with 7-cyano-7-deazaguanine (preQ0) at position 15 in the dihydrouridine loop (D-loop) of archaeal tRNAs. In Aeropyrum pernix (strain ATCC 700893 / DSM 11879 / JCM 9820 / NBRC 100138 / K1), this protein is tRNA-guanine(15) transglycosylase.